Consider the following 389-residue polypeptide: Glutaryl-CoA dehydrogenase (389 aa).

Residues Arg-87 and Asn-91 each coordinate substrate. FAD is bound by residues 126-129 (FGIT), Ser-135, and 159-161 (WIS). Ser-135 serves as a coordination point for substrate. A substrate-binding site is contributed by Ser-181. FAD is bound by residues Arg-271, 281-284 (FQMN), Arg-340, Ala-344, and 367-371 (EGSAN). The active-site Proton acceptor is the Glu-367. Residue Arg-385 coordinates substrate.

The protein belongs to the acyl-CoA dehydrogenase family. As to quaternary structure, homotetramer. FAD is required as a cofactor.

The catalysed reaction is glutaryl-CoA + A = (2E)-glutaconyl-CoA + AH2. The protein operates within aromatic compound metabolism; benzoyl-CoA degradation. Inhibited by glutaconyl-CoA. In terms of biological role, catalyzes the dehydrogenation of Glutaryl-CoA to glutaconyl-CoA. The polypeptide is Glutaryl-CoA dehydrogenase (Acd) (Desulfococcus multivorans).